A 726-amino-acid chain; its full sequence is ORC ubiquitin ligase 1 (726 aa).

The segment at 18-56 (CHICLGKVRQPVICINNHVFCSICIDLWLKNNSQCPACR) adopts an RING-type; degenerate zinc-finger fold. Coiled coils occupy residues 87–129 (LRKT…TILD) and 155–270 (ETVA…MNSI). The residue at position 210 (Ser210) is a Phosphoserine. A disordered region spans residues 274 to 335 (ALPADGKGSK…ARQESTSKAE (62 aa)). The span at 280–290 (KGSKGSEEDVA) shows a compositional bias: basic and acidic residues. Over residues 300–320 (KQPSSSTSSSSHLAKPSSSRL) the composition is skewed to low complexity. A compositionally biased stretch (polar residues) spans 321–334 (CDTSSARQESTSKA). 7 positions are modified to phosphoserine: Ser526, Ser553, Ser561, Ser568, Ser570, Ser719, and Ser721. The disordered stretch occupies residues 687–726 (QSPWSTSFVPEKRNKNVNQSTKRKIQSSLSNASPSKATKS). The span at 702 to 726 (NVNQSTKRKIQSSLSNASPSKATKS) shows a compositional bias: polar residues.

In terms of assembly, associates with ORC complex. Binds to chromatin; association is cell cycle-regulated, absent from mitotic chromosomes, is associated with chromatin from G1 and partially released from chromatin from mid S-phase. In terms of processing, auto-ubiquitinated.

Its subcellular location is the chromosome. It catalyses the reaction S-ubiquitinyl-[E2 ubiquitin-conjugating enzyme]-L-cysteine + [acceptor protein]-L-lysine = [E2 ubiquitin-conjugating enzyme]-L-cysteine + N(6)-ubiquitinyl-[acceptor protein]-L-lysine.. E3 ubiquitin ligase essential for DNA replication origin activation during S phase. Acts as a replication origin selector which selects the origins to be fired and catalyzes the multi-mono-ubiquitination of a subset of chromatin-bound ORC3 and ORC5 during S-phase. The chain is ORC ubiquitin ligase 1 (OBI1) from Pongo abelii (Sumatran orangutan).